A 253-amino-acid chain; its full sequence is Ubiquinone/menaquinone biosynthesis C-methyltransferase UbiE (253 aa).

S-adenosyl-L-methionine-binding positions include T76, D97, 125–126 (NA), and S142.

It belongs to the class I-like SAM-binding methyltransferase superfamily. MenG/UbiE family.

It carries out the reaction a 2-demethylmenaquinol + S-adenosyl-L-methionine = a menaquinol + S-adenosyl-L-homocysteine + H(+). The enzyme catalyses a 2-methoxy-6-(all-trans-polyprenyl)benzene-1,4-diol + S-adenosyl-L-methionine = a 5-methoxy-2-methyl-3-(all-trans-polyprenyl)benzene-1,4-diol + S-adenosyl-L-homocysteine + H(+). It participates in quinol/quinone metabolism; menaquinone biosynthesis; menaquinol from 1,4-dihydroxy-2-naphthoate: step 2/2. It functions in the pathway cofactor biosynthesis; ubiquinone biosynthesis. Functionally, methyltransferase required for the conversion of demethylmenaquinol (DMKH2) to menaquinol (MKH2) and the conversion of 2-polyprenyl-6-methoxy-1,4-benzoquinol (DDMQH2) to 2-polyprenyl-3-methyl-6-methoxy-1,4-benzoquinol (DMQH2). This chain is Ubiquinone/menaquinone biosynthesis C-methyltransferase UbiE, found in Xylella fastidiosa (strain M12).